Here is a 548-residue protein sequence, read N- to C-terminus: Chaperonin GroEL (548 aa).

ATP contacts are provided by residues 30–33 (TLGP), K51, 87–91 (DGTTT), G415, 479–481 (NAA), and D495.

The protein belongs to the chaperonin (HSP60) family. Forms a cylinder of 14 subunits composed of two heptameric rings stacked back-to-back. Interacts with the co-chaperonin GroES.

The protein localises to the cytoplasm. It catalyses the reaction ATP + H2O + a folded polypeptide = ADP + phosphate + an unfolded polypeptide.. Together with its co-chaperonin GroES, plays an essential role in assisting protein folding. The GroEL-GroES system forms a nano-cage that allows encapsulation of the non-native substrate proteins and provides a physical environment optimized to promote and accelerate protein folding. The chain is Chaperonin GroEL from Oleidesulfovibrio alaskensis (strain ATCC BAA-1058 / DSM 17464 / G20) (Desulfovibrio alaskensis).